Consider the following 739-residue polypeptide: MEHTYQYAWVIPLLPLPVIMSMGFGLFFIPTATKNLRRIWAFPSVLLLSIAMVFSVQLSIQQINGSSIYQYLWSWTVNNDFSLEFGYLIDPLTSIMLILITTVGILVLIYSDGYMSHDEGYLRFFVYISFFNTSMLGLVTSSNLIQIYFFWELVGMCSYLLIGFWFTRPLAASACQKAFVTNRVGDFGLLLGILGFFWITGSLEFRDLFKIANNWIPNNGINSLLTTLCAFLLFLGAVAKSAQFPLHVWLPDAMEGPTPISALIHAATMVAAGIFLLARLLPLFISLPLIMSLISLVGTITLFLGATLALAQRDIKRSLAYSTMSQLGYMMLALGIGSYQAALFHLITHAYSKALLFLGSGSIIHSMEPLVGYSPDKSQNMVLMGGLRKYIPITRSTFLWGTLSLCGIPPLACFWSKDEILSNSWLYSPFFGIIASFTAGLTAFYMFRIYLLTFDGYLRVHFQNYSSTKEGPLYSISLWGKRIPKGVNGDFVLSTTKSGVSFFSQNIPKMQGNTTNRIGCFSTSFGAKKTFAYPHETGNTMLFPLLILLLFTFFIGFIGISFDNGATDNGIAGLTILSKWLTPSINFTQESSNSSINSYEFITNAISSVSLAIFGLFIAYIFYGSAYSFFQNLDLQNSFYKESPKKAFFGKVKKKIYSWSYNRGYIDIFYTRVFTLGIRGLTELTEFFDKGVIDGITNGVGLVSFCIGEEIKYVGGGRISSYLFFFLCYVSIFLFFFLF.

Helical transmembrane passes span 9-29 (WVIP…LFFI), 39-59 (IWAF…VQLS), 89-109 (IDPL…LVLI), 125-145 (FVYI…SNLI), 147-167 (IYFF…FWFT), 185-205 (GDFG…SLEF), 219-239 (NGIN…GAVA), 258-278 (TPIS…FLLA), 280-300 (LLPL…VGTI), 327-347 (LGYM…FHLI), 354-374 (ALLF…VGYS), 396-416 (STFL…CFWS), 425-445 (WLYS…TAFY), 542-562 (LFPL…GISF), 610-630 (SLAI…YSFF), and 719-739 (ISSY…FFLF).

The protein belongs to the complex I subunit 5 family. In terms of assembly, NDH is composed of at least 16 different subunits, 5 of which are encoded in the nucleus.

The protein localises to the plastid. The protein resides in the chloroplast thylakoid membrane. It carries out the reaction a plastoquinone + NADH + (n+1) H(+)(in) = a plastoquinol + NAD(+) + n H(+)(out). The enzyme catalyses a plastoquinone + NADPH + (n+1) H(+)(in) = a plastoquinol + NADP(+) + n H(+)(out). Functionally, NDH shuttles electrons from NAD(P)H:plastoquinone, via FMN and iron-sulfur (Fe-S) centers, to quinones in the photosynthetic chain and possibly in a chloroplast respiratory chain. The immediate electron acceptor for the enzyme in this species is believed to be plastoquinone. Couples the redox reaction to proton translocation, and thus conserves the redox energy in a proton gradient. The sequence is that of NAD(P)H-quinone oxidoreductase subunit 5, chloroplastic (ndhF) from Agrostis stolonifera (Creeping bentgrass).